We begin with the raw amino-acid sequence, 456 residues long: MFS-type transporter ppzB (456 aa).

The next 5 helical transmembrane spans lie at 1–21 (MGLF…PFIM), 38–58 (GFLA…GWAA), 72–92 (VFLF…LLVV), 125–145 (IGTI…LGGV), and 154–174 (AVFA…GLVI). A disordered region spans residues 206-225 (EAQERTHEGTPLLPQDDDDD). Helical transmembrane passes span 255–275 (LAML…ATVP), 284–304 (FSSL…FALG), 318–338 (AAAT…GLPE), 348–368 (VALF…VTSP), 398–418 (FGFS…LGGV), and 427–447 (VMGA…FLFV).

This sequence belongs to the major facilitator superfamily. TCR/Tet family.

It is found in the membrane. Its function is as follows. MFS-type transporter; part of the gene cluster that mediates the biosynthesis of pyrrolopyrazines, secondary metabolites showing insecticidal activity. Probably involved in the secretion of peramine and other pyrrolopyrazines. This is MFS-type transporter ppzB (ppzB) from Metarhizium majus (strain ARSEF 297).